The sequence spans 355 residues: Uroporphyrinogen decarboxylase (355 aa).

Substrate-binding positions include 27 to 31, Asp-78, Tyr-155, Ser-210, and His-328; that span reads RQAGR.

The protein belongs to the uroporphyrinogen decarboxylase family. Homodimer.

It localises to the cytoplasm. The enzyme catalyses uroporphyrinogen III + 4 H(+) = coproporphyrinogen III + 4 CO2. The protein operates within porphyrin-containing compound metabolism; protoporphyrin-IX biosynthesis; coproporphyrinogen-III from 5-aminolevulinate: step 4/4. Its function is as follows. Catalyzes the decarboxylation of four acetate groups of uroporphyrinogen-III to yield coproporphyrinogen-III. This Ectopseudomonas mendocina (strain ymp) (Pseudomonas mendocina) protein is Uroporphyrinogen decarboxylase.